Consider the following 411-residue polypeptide: Citrate synthase (411 aa).

Active-site residues include His304 and Asp363.

This sequence belongs to the citrate synthase family.

It carries out the reaction oxaloacetate + acetyl-CoA + H2O = citrate + CoA + H(+). It participates in carbohydrate metabolism; tricarboxylic acid cycle; isocitrate from oxaloacetate: step 1/2. The polypeptide is Citrate synthase (gltA) (Rickettsia helvetica).